The following is a 294-amino-acid chain: UDP-3-O-acyl-N-acetylglucosamine deacetylase (294 aa).

Histidine 75, histidine 232, and aspartate 236 together coordinate Zn(2+). Histidine 259 serves as the catalytic Proton donor.

This sequence belongs to the LpxC family. It depends on Zn(2+) as a cofactor.

It catalyses the reaction a UDP-3-O-[(3R)-3-hydroxyacyl]-N-acetyl-alpha-D-glucosamine + H2O = a UDP-3-O-[(3R)-3-hydroxyacyl]-alpha-D-glucosamine + acetate. It participates in glycolipid biosynthesis; lipid IV(A) biosynthesis; lipid IV(A) from (3R)-3-hydroxytetradecanoyl-[acyl-carrier-protein] and UDP-N-acetyl-alpha-D-glucosamine: step 2/6. In terms of biological role, catalyzes the hydrolysis of UDP-3-O-myristoyl-N-acetylglucosamine to form UDP-3-O-myristoylglucosamine and acetate, the committed step in lipid A biosynthesis. This is UDP-3-O-acyl-N-acetylglucosamine deacetylase from Campylobacter curvus (strain 525.92).